A 226-amino-acid polypeptide reads, in one-letter code: Cytidylate kinase (226 aa).

10 to 18 (GPASSGKST) contributes to the ATP binding site.

This sequence belongs to the cytidylate kinase family. Type 1 subfamily.

Its subcellular location is the cytoplasm. It catalyses the reaction CMP + ATP = CDP + ADP. It carries out the reaction dCMP + ATP = dCDP + ADP. The protein is Cytidylate kinase of Streptococcus uberis (strain ATCC BAA-854 / 0140J).